Here is a 216-residue protein sequence, read N- to C-terminus: 2,5-diamino-6-ribosylamino-4(3H)-pyrimidinone 5'-phosphate reductase (216 aa).

NADP(+) contacts are provided by residues threonine 51, aspartate 55, 79-82, valine 126, and 148-151; these read SMAR and GSTL.

This sequence belongs to the HTP reductase family. Homodimer.

It catalyses the reaction 2,5-diamino-6-(1-D-ribitylamino)pyrimidin-4(3H)-one 5'-phosphate + NADP(+) = 2,5-diamino-6-(1-D-ribosylamino)pyrimidin-4(3H)-one 5'-phosphate + NADPH + H(+). It carries out the reaction 2,5-diamino-6-(1-D-ribitylamino)pyrimidin-4(3H)-one 5'-phosphate + NAD(+) = 2,5-diamino-6-(1-D-ribosylamino)pyrimidin-4(3H)-one 5'-phosphate + NADH + H(+). It functions in the pathway cofactor biosynthesis; riboflavin biosynthesis. In terms of biological role, catalyzes an early step in riboflavin biosynthesis, the NADPH-dependent reduction of the ribose side chain of 2,5-diamino-6-ribosylamino-4(3H)-pyrimidinone 5'-phosphate, yielding 2,5-diamino-6-ribitylamino-4(3H)-pyrimidinone 5'-phosphate. The chain is 2,5-diamino-6-ribosylamino-4(3H)-pyrimidinone 5'-phosphate reductase from Methanothermobacter thermautotrophicus (strain ATCC 29096 / DSM 1053 / JCM 10044 / NBRC 100330 / Delta H) (Methanobacterium thermoautotrophicum).